The following is a 115-amino-acid chain: Parathyroid hormone (115 aa).

The first 25 residues, methionine 1 to glycine 25, serve as a signal peptide directing secretion. Residues lysine 26 to arginine 31 constitute a propeptide that is removed on maturation. The segment at arginine 51 to glycine 69 is important for receptor binding. Residues glycine 77–glycine 99 form a disordered region. Basic and acidic residues predominate over residues lysine 84–glycine 99.

It belongs to the parathyroid hormone family. As to quaternary structure, interacts with PTH1R (via N-terminal extracellular domain).

Its subcellular location is the secreted. Parathyroid hormone elevates calcium level by dissolving the salts in bone and preventing their renal excretion. Acts by binding to its receptor, PTH1R, activating G protein-coupled receptor signaling. Stimulates [1-14C]-2-deoxy-D-glucose (2DG) transport and glycogen synthesis in osteoblastic cells. The chain is Parathyroid hormone from Bos taurus (Bovine).